The chain runs to 262 residues: Ribosomal RNA small subunit methyltransferase A (262 aa).

6 residues coordinate S-adenosyl-L-methionine: His-19, Leu-21, Gly-44, Glu-65, Asp-90, and Asn-109. Positions Leu-218–Glu-246 are disordered.

It belongs to the class I-like SAM-binding methyltransferase superfamily. rRNA adenine N(6)-methyltransferase family. RsmA subfamily.

It is found in the cytoplasm. It carries out the reaction adenosine(1518)/adenosine(1519) in 16S rRNA + 4 S-adenosyl-L-methionine = N(6)-dimethyladenosine(1518)/N(6)-dimethyladenosine(1519) in 16S rRNA + 4 S-adenosyl-L-homocysteine + 4 H(+). In terms of biological role, specifically dimethylates two adjacent adenosines (A1518 and A1519) in the loop of a conserved hairpin near the 3'-end of 16S rRNA in the 30S particle. May play a critical role in biogenesis of 30S subunits. The protein is Ribosomal RNA small subunit methyltransferase A of Rubrobacter xylanophilus (strain DSM 9941 / JCM 11954 / NBRC 16129 / PRD-1).